The following is a 340-amino-acid chain: Chitinase 7 (340 aa).

The first 32 residues, 1-32 (MIAARAANLQVAMKALALAVLALAYAAATARA), serve as a signal peptide directing secretion. Residues 33–73 (EQCGRQAGGARCPNRLCCSRWGWCGLTDDYCKGGCQSQCRV) form the Chitin-binding type-1 domain. 7 disulfide bridges follow: C35–C50, C44–C56, C49–C63, C67–C71, C118–C173, C185–C193, and C293–C323.

Belongs to the glycosyl hydrolase 19 family. Chitinase class I subfamily. In terms of tissue distribution, expressed in pistils, stamens and lodicules.

The enzyme catalyses Random endo-hydrolysis of N-acetyl-beta-D-glucosaminide (1-&gt;4)-beta-linkages in chitin and chitodextrins.. Its function is as follows. Hydrolyzes chitin and may play a role in defense against fungal pathogens containing chitin. This Oryza sativa subsp. indica (Rice) protein is Chitinase 7 (Cht7).